Consider the following 133-residue polypeptide: Holo-[acyl-carrier-protein] synthase (133 aa).

Positions 8 and 57 each coordinate Mg(2+).

The protein belongs to the P-Pant transferase superfamily. AcpS family. It depends on Mg(2+) as a cofactor.

The protein resides in the cytoplasm. It carries out the reaction apo-[ACP] + CoA = holo-[ACP] + adenosine 3',5'-bisphosphate + H(+). Transfers the 4'-phosphopantetheine moiety from coenzyme A to a Ser of acyl-carrier-protein. This is Holo-[acyl-carrier-protein] synthase from Caulobacter sp. (strain K31).